Reading from the N-terminus, the 268-residue chain is Tryptophan synthase alpha chain (268 aa).

Catalysis depends on proton acceptor residues glutamate 49 and aspartate 60.

This sequence belongs to the TrpA family. In terms of assembly, tetramer of two alpha and two beta chains.

It catalyses the reaction (1S,2R)-1-C-(indol-3-yl)glycerol 3-phosphate + L-serine = D-glyceraldehyde 3-phosphate + L-tryptophan + H2O. It participates in amino-acid biosynthesis; L-tryptophan biosynthesis; L-tryptophan from chorismate: step 5/5. Functionally, the alpha subunit is responsible for the aldol cleavage of indoleglycerol phosphate to indole and glyceraldehyde 3-phosphate. This is Tryptophan synthase alpha chain from Salmonella paratyphi A (strain ATCC 9150 / SARB42).